A 1178-amino-acid chain; its full sequence is Niemann-Pick type C1-related protein (1178 aa).

N-linked (GlcNAc...) asparagine glycosylation is present at Asn-41. A run of 2 helical transmembrane segments spans residues Pro-157 to Leu-177 and Val-412 to Val-432. An SSD domain is found at Glu-414–Leu-570. Asn-433 carries N-linked (GlcNAc...) asparagine glycosylation. Helical transmembrane passes span Gly-448–Val-468, Pro-478–Leu-498, Ala-516–Leu-536, and Phe-545–Leu-565. N-linked (GlcNAc...) asparagine glycosylation is present at Asn-621. Residues Ala-789 to Leu-809 form a helical membrane-spanning segment. Residues Asn-917 and Asn-943 are each glycosylated (N-linked (GlcNAc...) asparagine). 5 helical membrane passes run Phe-986 to Ile-1006, Ile-1013 to Ile-1033, Leu-1037 to Ile-1057, Ile-1080 to Leu-1100, and Met-1114 to Leu-1134.

The protein belongs to the patched family.

The protein resides in the inner membrane complex. The catalysed reaction is cholesterol(in) = cholesterol(out). Likely facilitates the efflux of cholesterol and gangliosides from membranes. Plays a role in the regulation of lipid homeostasis. This is Niemann-Pick type C1-related protein from Toxoplasma gondii (strain ATCC 50611 / Me49).